A 228-amino-acid chain; its full sequence is Probable GTP-binding protein EngB (228 aa).

The EngB-type G domain maps to Tyr-48–Ser-222. GTP contacts are provided by residues Gly-56–Ser-63, Gly-83–Leu-87, Asp-101–Gly-104, Asn-168–Asp-171, and Phe-201–Ser-203. The Mg(2+) site is built by Ser-63 and Thr-85.

It belongs to the TRAFAC class TrmE-Era-EngA-EngB-Septin-like GTPase superfamily. EngB GTPase family. Requires Mg(2+) as cofactor.

In terms of biological role, necessary for normal cell division and for the maintenance of normal septation. This is Probable GTP-binding protein EngB from Buchnera aphidicola subsp. Baizongia pistaciae (strain Bp).